Consider the following 294-residue polypeptide: Nucleotide-binding protein CLL_A3342 (294 aa).

8 to 15 (GLSGAGKT) is an ATP binding site. GTP is bound at residue 59–62 (DIRG).

Belongs to the RapZ-like family.

Displays ATPase and GTPase activities. The protein is Nucleotide-binding protein CLL_A3342 of Clostridium botulinum (strain Eklund 17B / Type B).